Consider the following 427-residue polypeptide: ATP synthase subunit beta (427 aa).

160–167 (GGAGVGKT) provides a ligand contact to ATP.

Belongs to the ATPase alpha/beta chains family. In terms of assembly, F-type ATPases have 2 components, CF(1) - the catalytic core - and CF(0) - the membrane proton channel. CF(1) has five subunits: alpha(3), beta(3), gamma(1), delta(1), epsilon(1). CF(0) has three main subunits: a(1), b(2) and c(9-12). The alpha and beta chains form an alternating ring which encloses part of the gamma chain. CF(1) is attached to CF(0) by a central stalk formed by the gamma and epsilon chains, while a peripheral stalk is formed by the delta and b chains.

The protein resides in the cell membrane. It catalyses the reaction ATP + H2O + 4 H(+)(in) = ADP + phosphate + 5 H(+)(out). Produces ATP from ADP in the presence of a proton gradient across the membrane. The catalytic sites are hosted primarily by the beta subunits. The protein is ATP synthase subunit beta of Peptococcus niger.